Here is a 343-residue protein sequence, read N- to C-terminus: Oxygen-dependent coproporphyrinogen-III oxidase (343 aa).

Ser-99 contacts substrate. A divalent metal cation is bound by residues His-103 and His-113. Residue His-113 is the Proton donor of the active site. 115–117 provides a ligand contact to substrate; that stretch reads NYR. Residues His-147 and His-177 each coordinate a divalent metal cation. The segment at 267-302 is important for dimerization; that stretch reads YVEFNLVWDRGTIFGLQTNGRTESILMSLPPLARWE.

It belongs to the aerobic coproporphyrinogen-III oxidase family. Homodimer. A divalent metal cation serves as cofactor.

Its subcellular location is the cytoplasm. It catalyses the reaction coproporphyrinogen III + O2 + 2 H(+) = protoporphyrinogen IX + 2 CO2 + 2 H2O. It functions in the pathway porphyrin-containing compound metabolism; protoporphyrin-IX biosynthesis; protoporphyrinogen-IX from coproporphyrinogen-III (O2 route): step 1/1. In terms of biological role, involved in the heme and chlorophyll biosynthesis. Catalyzes the aerobic oxidative decarboxylation of propionate groups of rings A and B of coproporphyrinogen-III to yield the vinyl groups in protoporphyrinogen-IX. The chain is Oxygen-dependent coproporphyrinogen-III oxidase from Prochlorococcus marinus (strain SARG / CCMP1375 / SS120).